The following is an 87-amino-acid chain: Small ribosomal subunit protein bS20 (87 aa).

Belongs to the bacterial ribosomal protein bS20 family.

Functionally, binds directly to 16S ribosomal RNA. This chain is Small ribosomal subunit protein bS20, found in Roseobacter denitrificans (strain ATCC 33942 / OCh 114) (Erythrobacter sp. (strain OCh 114)).